Reading from the N-terminus, the 483-residue chain is Glycogen synthase (483 aa).

K15 is a binding site for ADP-alpha-D-glucose.

This sequence belongs to the glycosyltransferase 1 family. Bacterial/plant glycogen synthase subfamily.

The catalysed reaction is [(1-&gt;4)-alpha-D-glucosyl](n) + ADP-alpha-D-glucose = [(1-&gt;4)-alpha-D-glucosyl](n+1) + ADP + H(+). Its pathway is glycan biosynthesis; glycogen biosynthesis. Synthesizes alpha-1,4-glucan chains using ADP-glucose. This chain is Glycogen synthase, found in Petrotoga mobilis (strain DSM 10674 / SJ95).